The following is a 331-amino-acid chain: Ribose-phosphate pyrophosphokinase (331 aa).

55-57 (DGE) is a binding site for ATP. Mg(2+) is bound by residues H148 and D187. K211 is an active-site residue. D-ribose 5-phosphate is bound by residues R213, D237, and 241-245 (DTGGT).

It belongs to the ribose-phosphate pyrophosphokinase family. Class I subfamily. As to quaternary structure, homohexamer. It depends on Mg(2+) as a cofactor.

It localises to the cytoplasm. The enzyme catalyses D-ribose 5-phosphate + ATP = 5-phospho-alpha-D-ribose 1-diphosphate + AMP + H(+). Its pathway is metabolic intermediate biosynthesis; 5-phospho-alpha-D-ribose 1-diphosphate biosynthesis; 5-phospho-alpha-D-ribose 1-diphosphate from D-ribose 5-phosphate (route I): step 1/1. In terms of biological role, involved in the biosynthesis of the central metabolite phospho-alpha-D-ribosyl-1-pyrophosphate (PRPP) via the transfer of pyrophosphoryl group from ATP to 1-hydroxyl of ribose-5-phosphate (Rib-5-P). The chain is Ribose-phosphate pyrophosphokinase from Parasynechococcus marenigrum (strain WH8102).